Reading from the N-terminus, the 360-residue chain is Chorismate synthase (360 aa).

NADP(+) is bound at residue Arg-46. Residues Arg-122–Ser-124, Gly-282, Lys-297–Ser-301, and Arg-324 contribute to the FMN site.

The protein belongs to the chorismate synthase family. Requires FMNH2 as cofactor.

The enzyme catalyses 5-O-(1-carboxyvinyl)-3-phosphoshikimate = chorismate + phosphate. It participates in metabolic intermediate biosynthesis; chorismate biosynthesis; chorismate from D-erythrose 4-phosphate and phosphoenolpyruvate: step 7/7. Its function is as follows. Catalyzes the anti-1,4-elimination of the C-3 phosphate and the C-6 proR hydrogen from 5-enolpyruvylshikimate-3-phosphate (EPSP) to yield chorismate, which is the branch point compound that serves as the starting substrate for the three terminal pathways of aromatic amino acid biosynthesis. This reaction introduces a second double bond into the aromatic ring system. The sequence is that of Chorismate synthase from Archaeoglobus fulgidus (strain ATCC 49558 / DSM 4304 / JCM 9628 / NBRC 100126 / VC-16).